A 173-amino-acid chain; its full sequence is Endoribonuclease YbeY (173 aa).

Zn(2+)-binding residues include H120, H124, and H130.

Belongs to the endoribonuclease YbeY family. Requires Zn(2+) as cofactor.

It localises to the cytoplasm. Its function is as follows. Single strand-specific metallo-endoribonuclease involved in late-stage 70S ribosome quality control and in maturation of the 3' terminus of the 16S rRNA. This Kineococcus radiotolerans (strain ATCC BAA-149 / DSM 14245 / SRS30216) protein is Endoribonuclease YbeY.